Consider the following 849-residue polypeptide: Disks large homolog 3 (849 aa).

The tract at residues 32 to 101 (DWQVPDPYGP…GKNTPKLNGS (70 aa)) is disordered. Over residues 41-53 (PSGGNGASSGYGG) the composition is skewed to gly residues. Over residues 57–69 (QTLPSQAGATPTP) the composition is skewed to polar residues. PDZ domains lie at 149–235 (EIVL…VRRR), 244–330 (EVNL…VAKP), and 404–484 (KIIL…AQYR). S157 carries the phosphoserine modification. Positions 519 to 589 (KRSLYVRALF…PSKKRVEKKE (71 aa)) constitute an SH3 domain. The 176-residue stretch at 659-834 (ARPVIILGPM…IYNKIKQIIE (176 aa)) folds into the Guanylate kinase-like domain. Y705 carries the phosphotyrosine modification.

The protein belongs to the MAGUK family. Interacts through its PDZ domains with NETO1 and APC. Interacts through its first two PDZ domains with ERBB4. Interacts through its third PDZ domain with NLGN1, and probably with NLGN2 and NLGN3. Interacts through its PDZ domains with GRIN2B and SYNGAP1. Interacts through its guanylate kinase-like domain with DLGAP1, DLGAP2, DLGAP3 and DLGAP4. Interacts with FRMPD4 (via C-terminus). Interacts with LRFN2. Interacts with LRFN1 and LRFN4. Interacts with FLTP. Interacts with DGKI (via PDZ-binding motif).

Its function is as follows. Required for learning most likely through its role in synaptic plasticity following NMDA receptor signaling. This is Disks large homolog 3 (Dlg3) from Rattus norvegicus (Rat).